Here is a 141-residue protein sequence, read N- to C-terminus: Hemoglobin subunit alpha-A (141 aa).

Residues 1 to 141 form the Globin domain; sequence VLSAADKTNV…VGAVLTAKYR (141 aa). Position 58 (H58) interacts with O2. H87 lines the heme b pocket.

The protein belongs to the globin family. As to quaternary structure, heterotetramer of two alpha chains and two beta chains. In terms of tissue distribution, red blood cells.

Functionally, involved in oxygen transport from the lung to the various peripheral tissues. The chain is Hemoglobin subunit alpha-A (HBAA) from Cygnus olor (Mute swan).